We begin with the raw amino-acid sequence, 890 residues long: Probable LRR receptor-like serine/threonine-protein kinase At1g51860 (890 aa).

An N-terminal signal peptide occupies residues M1–A23. At Q24–A513 the chain is on the extracellular side. N-linked (GlcNAc...) asparagine glycans are attached at residues N49, N96, N142, N181, N256, N285, N289, N295, N312, N332, N340, N402, and N419. LRR repeat units follow at residues R412–T435, L436–M458, and S460–L481. N465, N473, and N497 each carry an N-linked (GlcNAc...) asparagine glycan. A helical membrane pass occupies residues I514–I534. Over K535–R890 the chain is Cytoplasmic. Phosphothreonine is present on T575. Residues N584–V856 form the Protein kinase domain. ATP contacts are provided by residues L590–V598 and K611. Residue Y656 is modified to Phosphotyrosine. The active-site Proton acceptor is D708. Residue S742 is modified to Phosphoserine. Phosphothreonine occurs at positions 743 and 748. Y756 bears the Phosphotyrosine mark.

This sequence belongs to the protein kinase superfamily. Ser/Thr protein kinase family.

The protein localises to the membrane. The catalysed reaction is L-seryl-[protein] + ATP = O-phospho-L-seryl-[protein] + ADP + H(+). It carries out the reaction L-threonyl-[protein] + ATP = O-phospho-L-threonyl-[protein] + ADP + H(+). This Arabidopsis thaliana (Mouse-ear cress) protein is Probable LRR receptor-like serine/threonine-protein kinase At1g51860.